The following is a 420-amino-acid chain: MPAPTCFSCHKTRAALRRPRSGQALCGSCFCAAFEAEVLHTVLAGHLLPPGAVVAVGASGGKDSTVLAHVLRELAPRLGITLHLVAVDEGIGGYRDAALEAVRSQAARWELPLTIVAYEDLFGGWTMDAVARSTAGSGRSRSCCTFCGVLRRRALEEGARLVGATHIVTGHNADDMAETVLMNFLRGDAGRLARGGVLGSTGEGCALPRCRPLQFASQKEVVLYAHFRHLRYFSEECVYAPEAFRGHARDLLKLLEAARPSAVLDLVHSAERLALAPAAKPPPPGTCSRCGALASHKLCQACALLDGLNRGLPRLAIGKGRRVLQVEPPQPGNPSLVTSDPVAPAGPCTCKQPKDKANPCGNGGDRAGATCVSQCDLSPGNGEDRAGATCVSQRDLSLGNGGDRAGATCVSQCDLSPVAE.

At S200 the chain carries Phosphoserine.

This sequence belongs to the TtcA family. CTU1/NCS6/ATPBD3 subfamily. Component of a complex at least composed of URM1, CTU2/NCS2 and CTU1/ATPBD3. May form a heterodimer with CTU2/NCS2.

It localises to the cytoplasm. It functions in the pathway tRNA modification; 5-methoxycarbonylmethyl-2-thiouridine-tRNA biosynthesis. Its function is as follows. Plays a central role in 2-thiolation of mcm(5)S(2)U at tRNA wobble positions of tRNA(Lys), tRNA(Glu) and tRNA(Gln). Directly binds tRNAs and probably acts by catalyzing adenylation of tRNAs, an intermediate required for 2-thiolation. It is unclear whether it acts as a sulfurtransferase that transfers sulfur from thiocarboxylated URM1 onto the uridine of tRNAs at wobble position. The protein is Cytoplasmic tRNA 2-thiolation protein 1 (Ctu1) of Mus musculus (Mouse).